The following is a 435-amino-acid chain: Eukaryotic peptide chain release factor subunit 1-3 (435 aa).

Position 2 is an N-acetylalanine (alanine 2).

Belongs to the eukaryotic release factor 1 family. As to quaternary structure, heterodimer of two subunits, one of which binds GTP.

The protein localises to the cytoplasm. Its function is as follows. Directs the termination of nascent peptide synthesis (translation) in response to the termination codons UAA, UAG and UGA. Modulates plant growth and development. In Brassica oleracea var. botrytis (Cauliflower), this protein is Eukaryotic peptide chain release factor subunit 1-3.